A 126-amino-acid polypeptide reads, in one-letter code: Aspartate 1-decarboxylase (126 aa).

Residue S25 is the Schiff-base intermediate with substrate; via pyruvic acid of the active site. S25 is modified (pyruvic acid (Ser)). T57 contacts substrate. The active-site Proton donor is Y58. 73–75 (GAA) is a substrate binding site.

It belongs to the PanD family. Heterooctamer of four alpha and four beta subunits. The cofactor is pyruvate. In terms of processing, is synthesized initially as an inactive proenzyme, which is activated by self-cleavage at a specific serine bond to produce a beta-subunit with a hydroxyl group at its C-terminus and an alpha-subunit with a pyruvoyl group at its N-terminus.

The protein localises to the cytoplasm. It carries out the reaction L-aspartate + H(+) = beta-alanine + CO2. Its pathway is cofactor biosynthesis; (R)-pantothenate biosynthesis; beta-alanine from L-aspartate: step 1/1. Functionally, catalyzes the pyruvoyl-dependent decarboxylation of aspartate to produce beta-alanine. The chain is Aspartate 1-decarboxylase from Cellvibrio japonicus (strain Ueda107) (Pseudomonas fluorescens subsp. cellulosa).